The following is a 368-amino-acid chain: Aspartate-semialdehyde dehydrogenase (368 aa).

Residues 10–13 (RGMV), 37–38 (TS), and Q72 contribute to the NADP(+) site. R101 contacts phosphate. Catalysis depends on C134, which acts as the Acyl-thioester intermediate. NADP(+)-binding positions include 160 to 161 (SG) and P191. E239 contributes to the substrate binding site. Residue K242 participates in phosphate binding. R266 contacts substrate. The Proton acceptor role is filled by H273. Q349 is an NADP(+) binding site.

It belongs to the aspartate-semialdehyde dehydrogenase family. Homodimer.

It catalyses the reaction L-aspartate 4-semialdehyde + phosphate + NADP(+) = 4-phospho-L-aspartate + NADPH + H(+). The protein operates within amino-acid biosynthesis; L-lysine biosynthesis via DAP pathway; (S)-tetrahydrodipicolinate from L-aspartate: step 2/4. Its pathway is amino-acid biosynthesis; L-methionine biosynthesis via de novo pathway; L-homoserine from L-aspartate: step 2/3. It functions in the pathway amino-acid biosynthesis; L-threonine biosynthesis; L-threonine from L-aspartate: step 2/5. In terms of biological role, catalyzes the NADPH-dependent formation of L-aspartate-semialdehyde (L-ASA) by the reductive dephosphorylation of L-aspartyl-4-phosphate. The protein is Aspartate-semialdehyde dehydrogenase of Azotobacter vinelandii.